We begin with the raw amino-acid sequence, 376 residues long: Cytochrome c oxidase subunit 2, mitochondrial (376 aa).

A helical membrane pass occupies residues 164-184 (IFFFLVQILVFVLWVLSRALW). Residues 185-204 (CFRSKISPIPQRIVHGTTIE) lie on the Mitochondrial matrix side of the membrane. The chain crosses the membrane as a helical span at residues 205–225 (ILWTILPSIILMFIAIPSFTL). The Mitochondrial intermembrane segment spans residues 226–376 (LYSMDDVVVD…YGSWVSNQIQ (151 aa)). His309, Cys344, Glu346, Cys348, His352, and Met355 together coordinate Cu cation. Glu346 serves as a coordination point for Mg(2+).

Belongs to the cytochrome c oxidase subunit 2 family. Component of the cytochrome c oxidase (complex IV, CIV), a multisubunit enzyme composed of a catalytic core of 3 subunits and several supernumerary subunits. The complex exists as a monomer or a dimer and forms supercomplexes (SCs) in the inner mitochondrial membrane with ubiquinol-cytochrome c oxidoreductase (cytochrome b-c1 complex, complex III, CIII). It depends on Cu cation as a cofactor.

It localises to the mitochondrion inner membrane. It carries out the reaction 4 Fe(II)-[cytochrome c] + O2 + 8 H(+)(in) = 4 Fe(III)-[cytochrome c] + 2 H2O + 4 H(+)(out). In terms of biological role, component of the cytochrome c oxidase, the last enzyme in the mitochondrial electron transport chain which drives oxidative phosphorylation. The respiratory chain contains 3 multisubunit complexes succinate dehydrogenase (complex II, CII), ubiquinol-cytochrome c oxidoreductase (cytochrome b-c1 complex, complex III, CIII) and cytochrome c oxidase (complex IV, CIV), that cooperate to transfer electrons derived from NADH and succinate to molecular oxygen, creating an electrochemical gradient over the inner membrane that drives transmembrane transport and the ATP synthase. Cytochrome c oxidase is the component of the respiratory chain that catalyzes the reduction of oxygen to water. Electrons originating from reduced cytochrome c in the intermembrane space (IMS) are transferred via the dinuclear copper A center (CU(A)) of subunit 2 and heme A of subunit 1 to the active site in subunit 1, a binuclear center (BNC) formed by heme A3 and copper B (CU(B)). The BNC reduces molecular oxygen to 2 water molecules using 4 electrons from cytochrome c in the IMS and 4 protons from the mitochondrial matrix. This is Cytochrome c oxidase subunit 2, mitochondrial (COX2) from Vigna unguiculata (Cowpea).